A 173-amino-acid polypeptide reads, in one-letter code: Peptide methionine sulfoxide reductase MsrA (173 aa).

Cysteine 10 is a catalytic residue.

The protein belongs to the MsrA Met sulfoxide reductase family.

It carries out the reaction L-methionyl-[protein] + [thioredoxin]-disulfide + H2O = L-methionyl-(S)-S-oxide-[protein] + [thioredoxin]-dithiol. It catalyses the reaction [thioredoxin]-disulfide + L-methionine + H2O = L-methionine (S)-S-oxide + [thioredoxin]-dithiol. In terms of biological role, has an important function as a repair enzyme for proteins that have been inactivated by oxidation. Catalyzes the reversible oxidation-reduction of methionine sulfoxide in proteins to methionine. This Psychrobacter arcticus (strain DSM 17307 / VKM B-2377 / 273-4) protein is Peptide methionine sulfoxide reductase MsrA.